The chain runs to 856 residues: DNA mismatch repair protein MutS (856 aa).

618–625 (GPNMGGKS) is a binding site for ATP.

Belongs to the DNA mismatch repair MutS family.

Its function is as follows. This protein is involved in the repair of mismatches in DNA. It is possible that it carries out the mismatch recognition step. This protein has a weak ATPase activity. This chain is DNA mismatch repair protein MutS, found in Shewanella baltica (strain OS155 / ATCC BAA-1091).